The primary structure comprises 192 residues: Holliday junction branch migration complex subunit RuvA (192 aa).

Positions 1 to 64 (MIGRLTGILA…EDGHYLYGFL (64 aa)) are domain I. Residues 65–143 (TEAERFAFRQ…DATGVSLHPA (79 aa)) are domain II. Residues 144-149 (VDDSKQ) form a flexible linker region. The segment at 149–192 (QDISNALLALGYNEKEAASAMKQLPADVSTSDGIRAALKLLSKV) is domain III.

Belongs to the RuvA family. As to quaternary structure, homotetramer. Forms an RuvA(8)-RuvB(12)-Holliday junction (HJ) complex. HJ DNA is sandwiched between 2 RuvA tetramers; dsDNA enters through RuvA and exits via RuvB. An RuvB hexamer assembles on each DNA strand where it exits the tetramer. Each RuvB hexamer is contacted by two RuvA subunits (via domain III) on 2 adjacent RuvB subunits; this complex drives branch migration. In the full resolvosome a probable DNA-RuvA(4)-RuvB(12)-RuvC(2) complex forms which resolves the HJ.

Its subcellular location is the cytoplasm. Its function is as follows. The RuvA-RuvB-RuvC complex processes Holliday junction (HJ) DNA during genetic recombination and DNA repair, while the RuvA-RuvB complex plays an important role in the rescue of blocked DNA replication forks via replication fork reversal (RFR). RuvA specifically binds to HJ cruciform DNA, conferring on it an open structure. The RuvB hexamer acts as an ATP-dependent pump, pulling dsDNA into and through the RuvAB complex. HJ branch migration allows RuvC to scan DNA until it finds its consensus sequence, where it cleaves and resolves the cruciform DNA. The polypeptide is Holliday junction branch migration complex subunit RuvA (Dechloromonas aromatica (strain RCB)).